A 662-amino-acid chain; its full sequence is Histidine decarboxylase (662 aa).

Tyrosine 81 and histidine 194 together coordinate substrate. Position 305 is an N6-(pyridoxal phosphate)lysine (lysine 305).

The protein belongs to the group II decarboxylase family. In terms of assembly, homodimer. Pyridoxal 5'-phosphate is required as a cofactor.

It catalyses the reaction L-histidine + H(+) = histamine + CO2. The protein operates within amine and polyamine biosynthesis; histamine biosynthesis; histamine from L-histidine: step 1/1. Its function is as follows. Catalyzes the biosynthesis of histamine from histidine. The sequence is that of Histidine decarboxylase (HDC) from Homo sapiens (Human).